We begin with the raw amino-acid sequence, 264 residues long: Sexual differentiation protein ste4 (264 aa).

An SAM domain is found at 11-73 (WNNEAVCNWI…LSAIQSMKKQ (63 aa)). The leucine-zipper stretch occupies residues 111–139 (LEKRVEYLETENTKLVKTLNSLNSEFLQL). Residues 176–264 (GSFDLEVNDS…PSFVLSRRSC (89 aa)) form the Ras-associating domain.

In terms of assembly, homodimer or heterodimer with another leucine-zipper protein.

In terms of biological role, essential for mating and meiosis. The polypeptide is Sexual differentiation protein ste4 (ste4) (Schizosaccharomyces pombe (strain 972 / ATCC 24843) (Fission yeast)).